We begin with the raw amino-acid sequence, 406 residues long: Tryptophan synthase beta chain (406 aa).

Lys-99 is subject to N6-(pyridoxal phosphate)lysine.

The protein belongs to the TrpB family. Tetramer of two alpha and two beta chains. Requires pyridoxal 5'-phosphate as cofactor.

It catalyses the reaction (1S,2R)-1-C-(indol-3-yl)glycerol 3-phosphate + L-serine = D-glyceraldehyde 3-phosphate + L-tryptophan + H2O. The protein operates within amino-acid biosynthesis; L-tryptophan biosynthesis; L-tryptophan from chorismate: step 5/5. The beta subunit is responsible for the synthesis of L-tryptophan from indole and L-serine. This Brucella canis (strain ATCC 23365 / NCTC 10854 / RM-666) protein is Tryptophan synthase beta chain.